The primary structure comprises 2561 residues: Plipastatin synthase subunit A (2561 aa).

Residues 1 to 1038 (MSEHTYSLTH…ATVIREGTDS (1038 aa)) are domain 1 (glutamate-activating). Residues 2 to 300 (SEHTYSLTHA…SSLPIRITVD (299 aa)) form a condensation 1 region. The tract at residues 485–888 (TYAELDMYAS…SIEGVREAAV (404 aa)) is adenylation 1. The region spanning 961–1036 (APRNVTEMKL…GLATVIREGT (76 aa)) is the Carrier 1 domain. An O-(pantetheine 4'-phosphoryl)serine modification is found at serine 996. Residues 1048 to 1338 (KQETYPVSSA…NTLALRTRPE (291 aa)) are condensation 2. The domain 2 (D-ornithine-activating) stretch occupies residues 1048-2554 (KQETYPVSSA…ELTLSALSSI (1507 aa)). The segment at 1525-1932 (SYRLLNERAN…QTGLVREAAV (408 aa)) is adenylation 2. Residues 2007–2081 (APVNDLQKTM…ELCGHITPLA (75 aa)) form the Carrier 2 domain. The residue at position 2042 (serine 2042) is an O-(pantetheine 4'-phosphoryl)serine. An epimerization region spans residues 2089 to 2554 (AEGEAELTPI…ELTLSALSSI (466 aa)).

This sequence belongs to the ATP-dependent AMP-binding enzyme family. Pantetheine 4'-phosphate is required as a cofactor.

Functionally, this protein is a multifunctional enzyme, able to activate and polymerize the amino acids Glu and Orn as part of the biosynthesis of the lipopeptide antibiotic lipastatin. The Orn residue is further epimerized to the D-isomer form. The activation sites for these amino acids consist of individual domains. This chain is Plipastatin synthase subunit A (ppsA), found in Bacillus subtilis (strain 168).